Here is a 297-residue protein sequence, read N- to C-terminus: Acetylglutamate kinase (297 aa).

Substrate contacts are provided by residues 72–73 (GG), Arg-94, and Asn-193.

Belongs to the acetylglutamate kinase family. ArgB subfamily.

It localises to the cytoplasm. The catalysed reaction is N-acetyl-L-glutamate + ATP = N-acetyl-L-glutamyl 5-phosphate + ADP. Its pathway is amino-acid biosynthesis; L-arginine biosynthesis; N(2)-acetyl-L-ornithine from L-glutamate: step 2/4. Its function is as follows. Catalyzes the ATP-dependent phosphorylation of N-acetyl-L-glutamate. The polypeptide is Acetylglutamate kinase (Mycobacterium leprae (strain TN)).